Reading from the N-terminus, the 218-residue chain is Glutathione S-transferase (218 aa).

One can recognise a GST N-terminal domain in the interval 2 to 88 (PVTLGYWDIR…YIARKHDLCG (87 aa)). Glutathione is bound by residues 7–8 (YW), 46–50 (WLNEK), 59–60 (NL), and 72–73 (QS). Positions 90-208 (TEEERIQLDI…KSSRFSCKQI (119 aa)) constitute a GST C-terminal domain. Position 116 (Y116) interacts with substrate.

This sequence belongs to the GST superfamily. Mu family. Homodimer.

Its subcellular location is the cytoplasm. It catalyses the reaction RX + glutathione = an S-substituted glutathione + a halide anion + H(+). Conjugation of reduced glutathione to a wide number of exogenous and endogenous hydrophobic electrophiles. The protein is Glutathione S-transferase of Mesocricetus auratus (Golden hamster).